The chain runs to 38 residues: Cytochrome b6-f complex subunit 5 (38 aa).

Residues 5–25 (LLLGIVLGLIPVTLAGLFVAA) traverse the membrane as a helical segment.

Belongs to the PetG family. In terms of assembly, the 4 large subunits of the cytochrome b6-f complex are cytochrome b6, subunit IV (17 kDa polypeptide, PetD), cytochrome f and the Rieske protein, while the 4 small subunits are PetG, PetL, PetM and PetN. The complex functions as a dimer.

The protein localises to the cellular thylakoid membrane. Component of the cytochrome b6-f complex, which mediates electron transfer between photosystem II (PSII) and photosystem I (PSI), cyclic electron flow around PSI, and state transitions. PetG is required for either the stability or assembly of the cytochrome b6-f complex. The polypeptide is Cytochrome b6-f complex subunit 5 (Synechocystis sp. (strain ATCC 27184 / PCC 6803 / Kazusa)).